The sequence spans 248 residues: Ribonuclease PH (248 aa).

Phosphate is bound by residues arginine 86 and 124–126 (GTR).

The protein belongs to the RNase PH family. Homohexameric ring arranged as a trimer of dimers.

The catalysed reaction is tRNA(n+1) + phosphate = tRNA(n) + a ribonucleoside 5'-diphosphate. Its function is as follows. Phosphorolytic 3'-5' exoribonuclease that plays an important role in tRNA 3'-end maturation. Removes nucleotide residues following the 3'-CCA terminus of tRNAs; can also add nucleotides to the ends of RNA molecules by using nucleoside diphosphates as substrates, but this may not be physiologically important. Probably plays a role in initiation of 16S rRNA degradation (leading to ribosome degradation) during starvation. This Listeria innocua serovar 6a (strain ATCC BAA-680 / CLIP 11262) protein is Ribonuclease PH.